The sequence spans 362 residues: 3-dehydroquinate synthase (362 aa).

NAD(+) contacts are provided by residues 70–75 (EGEQYK), 104–108 (GVIGD), 128–129 (TT), lysine 141, lysine 150, and 168–171 (TLTT). 3 residues coordinate Zn(2+): glutamate 183, histidine 246, and histidine 263.

The protein belongs to the sugar phosphate cyclases superfamily. Dehydroquinate synthase family. Requires Co(2+) as cofactor. Zn(2+) is required as a cofactor. The cofactor is NAD(+).

The protein localises to the cytoplasm. It carries out the reaction 7-phospho-2-dehydro-3-deoxy-D-arabino-heptonate = 3-dehydroquinate + phosphate. Its pathway is metabolic intermediate biosynthesis; chorismate biosynthesis; chorismate from D-erythrose 4-phosphate and phosphoenolpyruvate: step 2/7. In terms of biological role, catalyzes the conversion of 3-deoxy-D-arabino-heptulosonate 7-phosphate (DAHP) to dehydroquinate (DHQ). The polypeptide is 3-dehydroquinate synthase (Histophilus somni (strain 2336) (Haemophilus somnus)).